The sequence spans 570 residues: Probable diguanylate cyclase DgcQ (570 aa).

The next 2 membrane-spanning stretches (helical) occupy residues 20-40 (FGPG…STLL) and 360-380 (IALT…WGVI). One can recognise a GGDEF domain in the interval 428-563 (QPFSVIQLDL…GRNRICASDA (136 aa)). Asp436 provides a ligand contact to Mg(2+). Positions 444, 449, and 453 each coordinate substrate. Glu479 serves as a coordination point for Mg(2+). Glu479 (proton acceptor) is an active-site residue.

In terms of assembly, homodimer. Requires Mg(2+) as cofactor.

The protein localises to the cell inner membrane. The catalysed reaction is 2 GTP = 3',3'-c-di-GMP + 2 diphosphate. It functions in the pathway glycan metabolism; bacterial cellulose biosynthesis. The protein operates within purine metabolism; 3',5'-cyclic di-GMP biosynthesis. Its function is as follows. Catalyzes the synthesis of cyclic-di-GMP (c-di-GMP) via the condensation of 2 GTP molecules. Cyclic-di-GMP is a second messenger which controls cell surface-associated traits in bacteria. Involved in the regulation of cellulose production. The protein is Probable diguanylate cyclase DgcQ of Salmonella choleraesuis (strain SC-B67).